We begin with the raw amino-acid sequence, 305 residues long: Non-homologous end joining protein Ku (305 aa).

The Ku domain occupies 16–202; sequence SLVSFGISLI…KVDPEQLSLA (187 aa). The interval 263-305 is disordered; sequence GEENGRKKSVSGAQHRSRRKSKGEQKLKVVRSGSSSDKRRKSA.

This sequence belongs to the prokaryotic Ku family. As to quaternary structure, homodimer. Interacts with LigD.

With LigD forms a non-homologous end joining (NHEJ) DNA repair enzyme, which repairs dsDNA breaks with reduced fidelity. Binds linear dsDNA with 5'- and 3'- overhangs but not closed circular dsDNA nor ssDNA. Recruits and stimulates the ligase activity of LigD. This chain is Non-homologous end joining protein Ku, found in Acidobacterium capsulatum (strain ATCC 51196 / DSM 11244 / BCRC 80197 / JCM 7670 / NBRC 15755 / NCIMB 13165 / 161).